The sequence spans 235 residues: Retron Ec48 transmembrane protein (235 aa).

The next 2 helical transmembrane spans lie at 11–31 and 64–84; these read IVGV…FETI and AFGW…ALMT.

The protein resides in the cell inner membrane. Functionally, membrane component of antiviral defense system Retron Ec48, composed of a non-coding RNA (ncRNA), a reverse transcriptase (RT) and this membrane protein. Expression of this retron confers protection against bacteriophages lambda, T2, T4, T5 and T7. At multiplicity of infection (MOI) of 0.02 cultures grow normally when infected with lambda without collapsing, at MOI 2 cultures enter growth stasis. At MOI 3 cell membranes are permeabilized within 15 minutes of infection but do not lyse, suggesting the phage are not able to finish a replication cycle. Antiviral defense is suppressed by mutations that knockout the lambda gam expression or phage T7 gp5.9 expression; both viral genes inhibit host RecBCD. The Ec48 retron may sense the integrity of the RecBCD enzyme; when RecBCD is perturbed by viral proteins the Ec48 effector (the membrane protein) is activated, leading to abortive infection and bacterial growth arrest. The chain is Retron Ec48 transmembrane protein from Escherichia coli.